A 346-amino-acid chain; its full sequence is Aspartate-semialdehyde dehydrogenase (346 aa).

Residues 12–15 and 40–41 contribute to the NADP(+) site; these read SGAV and RS. A phosphate-binding site is contributed by Arg-101. The active-site Acyl-thioester intermediate is the Cys-131. Substrate is bound at residue Gln-158. 161–162 provides a ligand contact to NADP(+); it reads SG. Residue Lys-225 participates in phosphate binding. Arg-246 contributes to the substrate binding site. The active-site Proton acceptor is the His-253. Gln-326 is a binding site for NADP(+).

This sequence belongs to the aspartate-semialdehyde dehydrogenase family. Homodimer.

The catalysed reaction is L-aspartate 4-semialdehyde + phosphate + NADP(+) = 4-phospho-L-aspartate + NADPH + H(+). Its pathway is amino-acid biosynthesis; L-lysine biosynthesis via DAP pathway; (S)-tetrahydrodipicolinate from L-aspartate: step 2/4. The protein operates within amino-acid biosynthesis; L-methionine biosynthesis via de novo pathway; L-homoserine from L-aspartate: step 2/3. It functions in the pathway amino-acid biosynthesis; L-threonine biosynthesis; L-threonine from L-aspartate: step 2/5. In terms of biological role, catalyzes the NADPH-dependent formation of L-aspartate-semialdehyde (L-ASA) by the reductive dephosphorylation of L-aspartyl-4-phosphate. The protein is Aspartate-semialdehyde dehydrogenase of Helicobacter pylori (strain ATCC 700392 / 26695) (Campylobacter pylori).